The primary structure comprises 102 residues: Small ribosomal subunit protein uS10 (102 aa).

It belongs to the universal ribosomal protein uS10 family. In terms of assembly, part of the 30S ribosomal subunit.

Its function is as follows. Involved in the binding of tRNA to the ribosomes. The protein is Small ribosomal subunit protein uS10 of Streptomyces griseus subsp. griseus (strain JCM 4626 / CBS 651.72 / NBRC 13350 / KCC S-0626 / ISP 5235).